The sequence spans 159 residues: Dihydrofolate reductase (159 aa).

Residues 1 to 158 (MISLIAALAV…HSYCFEILER (158 aa)) enclose the DHFR domain. Substrate is bound at residue Ile-5. NADP(+) is bound by residues Ala-7 and 13–19 (VIGMENA). A substrate-binding site is contributed by Asp-27. 45-46 (HT) lines the NADP(+) pocket. Residues Arg-52 and Arg-57 each coordinate substrate. NADP(+)-binding positions include 63–64 (SS), Lys-76, and 95–102 (GGGRVYEQ). A substrate-binding site is contributed by Thr-113.

Belongs to the dihydrofolate reductase family.

It carries out the reaction (6S)-5,6,7,8-tetrahydrofolate + NADP(+) = 7,8-dihydrofolate + NADPH + H(+). It functions in the pathway cofactor biosynthesis; tetrahydrofolate biosynthesis; 5,6,7,8-tetrahydrofolate from 7,8-dihydrofolate: step 1/1. Key enzyme in folate metabolism. Catalyzes an essential reaction for de novo glycine and purine synthesis, and for DNA precursor synthesis. This is Dihydrofolate reductase (folA) from Escherichia coli O6:H1 (strain CFT073 / ATCC 700928 / UPEC).